The primary structure comprises 288 residues: ATP synthase gamma chain (288 aa).

This sequence belongs to the ATPase gamma chain family. In terms of assembly, F-type ATPases have 2 components, CF(1) - the catalytic core - and CF(0) - the membrane proton channel. CF(1) has five subunits: alpha(3), beta(3), gamma(1), delta(1), epsilon(1). CF(0) has three main subunits: a, b and c.

It is found in the cell inner membrane. Functionally, produces ATP from ADP in the presence of a proton gradient across the membrane. The gamma chain is believed to be important in regulating ATPase activity and the flow of protons through the CF(0) complex. This Trichlorobacter lovleyi (strain ATCC BAA-1151 / DSM 17278 / SZ) (Geobacter lovleyi) protein is ATP synthase gamma chain.